The chain runs to 201 residues: Small ribosomal subunit protein uS4c (201 aa).

The interval 15-44 (LGALPGLTNKRPRAGSDLRNQSRSGKKSQY) is disordered. The S4 RNA-binding domain occupies 89-150 (MRLDNILFRL…EQKSKVLIQN (62 aa)).

Belongs to the universal ribosomal protein uS4 family. In terms of assembly, part of the 30S ribosomal subunit. Contacts protein S5. The interaction surface between S4 and S5 is involved in control of translational fidelity.

The protein resides in the plastid. It is found in the chloroplast. Its function is as follows. One of the primary rRNA binding proteins, it binds directly to 16S rRNA where it nucleates assembly of the body of the 30S subunit. With S5 and S12 plays an important role in translational accuracy. This is Small ribosomal subunit protein uS4c (rps4) from Lactuca sativa (Garden lettuce).